A 227-amino-acid polypeptide reads, in one-letter code: Putative molybdenum transport system permease protein YvgM (227 aa).

Transmembrane regions (helical) follow at residues 17–37 (VVLS…LGTL), 57–77 (FMLP…VIFG), 94–114 (VIFT…PLMY), 142–162 (VFIH…SILS), and 201–221 (TLAW…LFFI). In terms of domain architecture, ABC transmembrane type-1 spans 17 to 221 (VVLSFQVAAV…VISFLMLFFI (205 aa)).

The protein belongs to the binding-protein-dependent transport system permease family. CysTW subfamily.

The protein resides in the cell membrane. Its function is as follows. could be part of the binding-protein-dependent transport system for molybdenum; probably responsible for the translocation of the substrate across the membrane. This Bacillus subtilis (strain 168) protein is Putative molybdenum transport system permease protein YvgM (yvgM).